The sequence spans 346 residues: Elongation factor 1-alpha (346 aa).

Residues 1-127 form the tr-type G domain; sequence GTSQADVALL…DNVEPPKRPS (127 aa). 49-52 lines the GTP pocket; it reads NKMD.

It belongs to the TRAFAC class translation factor GTPase superfamily. Classic translation factor GTPase family. EF-Tu/EF-1A subfamily.

The protein resides in the cytoplasm. In terms of biological role, this protein promotes the GTP-dependent binding of aminoacyl-tRNA to the A-site of ribosomes during protein biosynthesis. The sequence is that of Elongation factor 1-alpha from Eimeria bovis.